We begin with the raw amino-acid sequence, 79 residues long: ATP synthase subunit c (79 aa).

2 helical membrane-spanning segments follow: residues 11-31 (IAVA…IGIL) and 53-73 (FFVV…LGLY).

It belongs to the ATPase C chain family. As to quaternary structure, F-type ATPases have 2 components, F(1) - the catalytic core - and F(0) - the membrane proton channel. F(1) has five subunits: alpha(3), beta(3), gamma(1), delta(1), epsilon(1). F(0) has three main subunits: a(1), b(2) and c(10-14). The alpha and beta chains form an alternating ring which encloses part of the gamma chain. F(1) is attached to F(0) by a central stalk formed by the gamma and epsilon chains, while a peripheral stalk is formed by the delta and b chains.

It localises to the cell membrane. Functionally, f(1)F(0) ATP synthase produces ATP from ADP in the presence of a proton or sodium gradient. F-type ATPases consist of two structural domains, F(1) containing the extramembraneous catalytic core and F(0) containing the membrane proton channel, linked together by a central stalk and a peripheral stalk. During catalysis, ATP synthesis in the catalytic domain of F(1) is coupled via a rotary mechanism of the central stalk subunits to proton translocation. Key component of the F(0) channel; it plays a direct role in translocation across the membrane. A homomeric c-ring of between 10-14 subunits forms the central stalk rotor element with the F(1) delta and epsilon subunits. This is ATP synthase subunit c from Buchnera aphidicola subsp. Acyrthosiphon pisum (strain 5A).